The chain runs to 181 residues: Insulin-like growth factor 2 (181 aa).

The first 24 residues, 1–24 (MGIPVGKSLLMLFTFLAFASCCIA), serve as a signal peptide directing secretion. Residues 25–52 (AYRPSETLCGGELVDTLQFVCGDRGFYF) are b. 3 disulfide bridges follow: cysteine 33/cysteine 71, cysteine 45/cysteine 84, and cysteine 70/cysteine 75. The segment at 53–64 (SRPASRINRRSR) is c. The a stretch occupies residues 65–85 (GIVEECCFRSCDLALLETYCA). Positions 86-91 (TPAKSE) are d. The propeptide at 92 to 181 (RDVSTPPTVL…AFVEVSSDLQ (90 aa)) is e peptide. Residue threonine 163 is glycosylated (O-linked (GalNAc...) threonine).

This sequence belongs to the insulin family. As to quaternary structure, interacts with MYORG; this interaction is required for IGF2 secretion. Interacts with integrins ITGAV:ITGB3 and ITGA6:ITGB4; integrin-binding is required for IGF2 signaling. Interacts with IGFBP2. Proteolytically processed by PCSK4, proIGF2 is cleaved at Arg-128 and Arg-92 to generate big-IGF2 and mature IGF2.

It localises to the secreted. Functionally, the insulin-like growth factors possess growth-promoting activity. Major fetal growth hormone in mammals. Plays a key role in regulating fetoplacental development. IGF2 is influenced by placental lactogen. Also involved in tissue differentiation. In adults, involved in glucose metabolism in adipose tissue, skeletal muscle and liver. Acts as a ligand for integrin which is required for IGF2 signaling. Positively regulates myogenic transcription factor MYOD1 function by facilitating the recruitment of transcriptional coactivators, thereby controlling muscle terminal differentiation. Inhibits myoblast differentiation and modulates metabolism via increasing the mitochondrial respiration rate. Preptin undergoes glucose-mediated co-secretion with insulin, and acts as a physiological amplifier of glucose-mediated insulin secretion. Exhibits osteogenic properties by increasing osteoblast mitogenic activity through phosphoactivation of MAPK1 and MAPK3. In Equus caballus (Horse), this protein is Insulin-like growth factor 2.